Reading from the N-terminus, the 86-residue chain is Large ribosomal subunit protein uL23 (86 aa).

Belongs to the universal ribosomal protein uL23 family. As to quaternary structure, part of the 50S ribosomal subunit. Contacts protein L29.

Its function is as follows. Binds to 23S rRNA. One of the proteins that surrounds the polypeptide exit tunnel on the outside of the ribosome. The chain is Large ribosomal subunit protein uL23 from Thermococcus kodakarensis (strain ATCC BAA-918 / JCM 12380 / KOD1) (Pyrococcus kodakaraensis (strain KOD1)).